Reading from the N-terminus, the 423-residue chain is ATP-dependent RNA helicase RhlB (423 aa).

The short motif at 9–37 (LRFSDLPLHHQVLAALQEKGFDYCTPIQA) is the Q motif element. In terms of domain architecture, Helicase ATP-binding spans 40–217 (LPMSLAGKDV…FEDMNDPEYV (178 aa)). 53–60 (AQTGTGKT) serves as a coordination point for ATP. The short motif at 163-166 (DEAD) is the DEAD box element. Residues 241-388 (KMALLLTLLE…VSQYDVAALL (148 aa)) enclose the Helicase C-terminal domain. The interval 397–423 (KRGNNNSKNSANSNRTFQKKRSLKRNF) is disordered. Residues 400–410 (NNNSKNSANSN) are compositionally biased toward low complexity. Over residues 413–423 (FQKKRSLKRNF) the composition is skewed to basic residues.

It belongs to the DEAD box helicase family. RhlB subfamily. As to quaternary structure, component of the RNA degradosome, which is a multiprotein complex involved in RNA processing and mRNA degradation.

Its subcellular location is the cytoplasm. The enzyme catalyses ATP + H2O = ADP + phosphate + H(+). Functionally, DEAD-box RNA helicase involved in RNA degradation. Has RNA-dependent ATPase activity and unwinds double-stranded RNA. This Pasteurella multocida (strain Pm70) protein is ATP-dependent RNA helicase RhlB.